A 327-amino-acid chain; its full sequence is G protein pathway suppressor 2 (327 aa).

Positions 14–109 (MARALHRHIM…RRRKEQSDLT (96 aa)) form a coiled coil. Positions 26–65 (RERKRQEEEEVDKMMEQKMKEEQERRKKKEMEERMSLEET) are disordered. Glycyl lysine isopeptide (Lys-Gly) (interchain with G-Cter in SUMO1) cross-links involve residues Lys45 and Lys71. The tract at residues 61-94 (SLEETKEQILKLQEKLSALQEEKHQLFLQLKKVL) is interaction with SUMO. 3 disordered regions span residues 178–208 (GQFQGSPGGAYGTAQPPPHYGPTQPAYSPSQ), 253–285 (QKQMEHANQQTSFSDSSSLRPMHPQALHPAPGL), and 300–327 (KSGFATTSQPGPRLPFIQHSQNPRFYHK). Over residues 253–271 (QKQMEHANQQTSFSDSSSL) the composition is skewed to polar residues. Arg312 is subject to Asymmetric dimethylarginine. Polar residues predominate over residues 317–327 (QHSQNPRFYHK). The residue at position 323 (Arg323) is an Asymmetric dimethylarginine; alternate. Arg323 is subject to Omega-N-methylarginine; alternate.

In terms of assembly, component of the N-Cor repressor complex, at least composed of NCOR1, NCOR2, HDAC3, TBL1X, TBL1R, CORO2A and GPS2. Interacts (when sumoylated at Lys-71) with TBL1X; leading to protect GPS2 from degradation by the proteasome. Interacts with UBE2N; leading to inhibit UBE2N/Ubc13 activity. Interacts with TRAF1. Interacts with TRAF2. Interacts with TRAF6. Interacts with PPARG (when in the liganded conformation). Interacts with (sumoylated) NR1H2; interaction with sumoylated NR1H2 and NR5A2 onto hepatic acute phase protein promoters prevents N-Cor corepressor complex dissociation. Interacts with (sumoylated) NR5A2; interaction with sumoylated NR1H2 and NR5A2 onto hepatic acute phase protein promoters prevents N-Cor corepressor complex dissociation. Interacts with NR1H3. Interacts with RFX4. Interacts with ANKRD26. Sumoylation regulates its subcellular location. Sumoylation at Lys-45 and Lys-71 regulates the shuttling between the cytoplasm and the nucleus. Sumoylation at Lys-71 is required for interaction with TBL1X. Sumoylated at Lys-45 and Lys-71 in mitochondrion. Desumoylation by SENP1 leads to relocation from the mitochondria to the nucleus. In terms of processing, ubiquitinated at the C-terminus by SIAH2; leading to its degradation by the proteasome. Interaction with TBL1X and methylation at Arg-323 protect GPS2 against ubiquitination and degradation. Post-translationally, methylated at Arg-312 and Arg-323 by PRMT6. Methylation at Arg-323 protects from degradation by the proteasome.

Its subcellular location is the nucleus. It is found in the mitochondrion. The protein localises to the cytoplasm. The protein resides in the cytosol. In terms of biological role, key regulator of inflammation, lipid metabolism and mitochondrion homeostasis that acts by inhibiting the activity of the ubiquitin-conjugating enzyme UBE2N/Ubc13, thereby inhibiting 'Lys-63'-linked ubiquitination. In the nucleus, can both acts as a corepressor and coactivator of transcription, depending on the context. Acts as a transcription coactivator in adipocytes by promoting the recruitment of PPARG to promoters: acts by inhibiting the activity of the ubiquitin-conjugating enzyme UBE2N/Ubc13, leading to stabilization of KDM4A and subsequent histone H3 'Lys-9' (H3K9) demethylation. Promotes cholesterol efflux by acting as a transcription coactivator. Acts as a regulator of B-cell development by inhibiting UBE2N/Ubc13, thereby restricting the activation of Toll-like receptors (TLRs) and B-cell antigen receptors (BCRs) signaling pathways. Acts as a key mediator of mitochondrial stress response: in response to mitochondrial depolarization, relocates from the mitochondria to the nucleus following desumoylation and specifically promotes expression of nuclear-encoded mitochondrial genes. Promotes transcription of nuclear-encoded mitochondrial genes by inhibiting UBE2N/Ubc13. Can also act as a corepressor as part of the N-Cor repressor complex by repressing active PPARG. Plays an anti-inflammatory role in macrophages and is required for insulin sensitivity by acting as a corepressor. Plays an anti-inflammatory role during the hepatic acute phase response by interacting with sumoylated NR1H2 and NR5A2 proteins, thereby preventing N-Cor corepressor complex dissociation. In the cytosol, also plays a non-transcriptional role by regulating insulin signaling and pro-inflammatory pathways. In the cytoplasm, acts as a negative regulator of inflammation by inhibiting the pro-inflammatory TNF-alpha pathway; acts by repressing UBE2N/Ubc13 activity. In the cytoplasm of adipocytes, restricts the activation of insulin signaling via inhibition of UBE2N/Ubc13-mediated ubiquitination of AKT. Able to suppress G-protein- and mitogen-activated protein kinase-mediated signal transduction. This chain is G protein pathway suppressor 2, found in Mus musculus (Mouse).